Here is a 55-residue protein sequence, read N- to C-terminus: ATP synthase F(0) complex subunit 8 (55 aa).

A helical membrane pass occupies residues 4–24 (LNPAPWFMIFMFTWAIFLTIL). The disordered stretch occupies residues 34–55 (PNEPSPQGMTTPKTAPWNWPWH).

It belongs to the ATPase protein 8 family. Component of the ATP synthase complex composed at least of ATP5F1A/subunit alpha, ATP5F1B/subunit beta, ATP5MC1/subunit c (homooctomer), MT-ATP6/subunit a, MT-ATP8/subunit 8, ATP5ME/subunit e, ATP5MF/subunit f, ATP5MG/subunit g, ATP5MK/subunit k, ATP5MJ/subunit j, ATP5F1C/subunit gamma, ATP5F1D/subunit delta, ATP5F1E/subunit epsilon, ATP5PF/subunit F6, ATP5PB/subunit b, ATP5PD/subunit d, ATP5PO/subunit OSCP. ATP synthase complex consists of a soluble F(1) head domain (subunits alpha(3) and beta(3)) - the catalytic core - and a membrane F(0) domain - the membrane proton channel (subunits c, a, 8, e, f, g, k and j). These two domains are linked by a central stalk (subunits gamma, delta, and epsilon) rotating inside the F1 region and a stationary peripheral stalk (subunits F6, b, d, and OSCP).

The protein localises to the mitochondrion membrane. Subunit 8, of the mitochondrial membrane ATP synthase complex (F(1)F(0) ATP synthase or Complex V) that produces ATP from ADP in the presence of a proton gradient across the membrane which is generated by electron transport complexes of the respiratory chain. ATP synthase complex consist of a soluble F(1) head domain - the catalytic core - and a membrane F(1) domain - the membrane proton channel. These two domains are linked by a central stalk rotating inside the F(1) region and a stationary peripheral stalk. During catalysis, ATP synthesis in the catalytic domain of F(1) is coupled via a rotary mechanism of the central stalk subunits to proton translocation. In vivo, can only synthesize ATP although its ATP hydrolase activity can be activated artificially in vitro. Part of the complex F(0) domain. In Gadus morhua (Atlantic cod), this protein is ATP synthase F(0) complex subunit 8.